The sequence spans 238 residues: Orotidine 5'-phosphate decarboxylase (238 aa).

Substrate-binding positions include aspartate 18, lysine 40, 67 to 76 (DMKLLDIDNT), threonine 122, arginine 183, glutamine 192, and arginine 213. The active-site Proton donor is lysine 69.

It belongs to the OMP decarboxylase family. Type 1 subfamily. As to quaternary structure, homodimer.

The enzyme catalyses orotidine 5'-phosphate + H(+) = UMP + CO2. Its pathway is pyrimidine metabolism; UMP biosynthesis via de novo pathway; UMP from orotate: step 2/2. In terms of biological role, catalyzes the decarboxylation of orotidine 5'-monophosphate (OMP) to uridine 5'-monophosphate (UMP). This chain is Orotidine 5'-phosphate decarboxylase, found in Brucella melitensis biotype 2 (strain ATCC 23457).